The following is a 288-amino-acid chain: Oxaloacetate decarboxylase (288 aa).

S47 lines the substrate pocket. D85 provides a ligand contact to Mg(2+). 2 residues coordinate substrate: R156 and H232.

The protein belongs to the isocitrate lyase/PEP mutase superfamily. Oxaloacetate decarboxylase family. Homotetramer; dimer of dimers. The cofactor is Mg(2+).

The enzyme catalyses oxaloacetate + H(+) = pyruvate + CO2. In terms of biological role, catalyzes the decarboxylation of oxaloacetate into pyruvate. Seems to play a role in maintaining cellular concentrations of bicarbonate and pyruvate. The protein is Oxaloacetate decarboxylase of Rhodopseudomonas palustris (strain BisB18).